The primary structure comprises 415 residues: G2/mitotic-specific cyclin cig1 (415 aa).

Disordered regions lie at residues 54-74 (PTLI…DTFE) and 86-118 (EERS…ILTH). A compositionally biased stretch (low complexity) spans 57–71 (IEGNNESSISSSTGD). Serine 96 carries the post-translational modification Phosphoserine.

Belongs to the cyclin family. Cyclin G subfamily.

Functionally, required for efficient passage of the G1/S transition. The chain is G2/mitotic-specific cyclin cig1 (cig1) from Schizosaccharomyces pombe (strain 972 / ATCC 24843) (Fission yeast).